Here is a 412-residue protein sequence, read N- to C-terminus: 1-deoxy-D-xylulose 5-phosphate reductoisomerase (412 aa).

NADPH-binding residues include Thr-5, Gly-6, Ser-7, Ile-8, Gly-31, Asn-33, and Asn-125. Residue Lys-126 participates in 1-deoxy-D-xylulose 5-phosphate binding. Glu-127 provides a ligand contact to NADPH. Residue Asp-151 participates in Mn(2+) binding. 1-deoxy-D-xylulose 5-phosphate contacts are provided by Ser-152, Glu-153, Ser-189, and His-212. Glu-153 serves as a coordination point for Mn(2+). Gly-218 contacts NADPH. Residues Ser-225, Asn-230, Lys-231, and Glu-234 each coordinate 1-deoxy-D-xylulose 5-phosphate. A Mn(2+)-binding site is contributed by Glu-234.

This sequence belongs to the DXR family. Requires Mg(2+) as cofactor. It depends on Mn(2+) as a cofactor.

It catalyses the reaction 2-C-methyl-D-erythritol 4-phosphate + NADP(+) = 1-deoxy-D-xylulose 5-phosphate + NADPH + H(+). The protein operates within isoprenoid biosynthesis; isopentenyl diphosphate biosynthesis via DXP pathway; isopentenyl diphosphate from 1-deoxy-D-xylulose 5-phosphate: step 1/6. In terms of biological role, catalyzes the NADPH-dependent rearrangement and reduction of 1-deoxy-D-xylulose-5-phosphate (DXP) to 2-C-methyl-D-erythritol 4-phosphate (MEP). The protein is 1-deoxy-D-xylulose 5-phosphate reductoisomerase of Prochlorococcus marinus (strain MIT 9313).